The primary structure comprises 441 residues: AP-2 complex subunit mu (441 aa).

The MHD domain occupies arginine 174–arginine 440.

It belongs to the adapter complexes medium subunit family. Adapter protein complex 2 (AP-2) is a heterotetramer composed of two large adaptins (alpha-type subunit and beta-type subunits), a medium adaptin (mu-type subunit AP50) and a small adaptin (sigma-type subunit AP17). As to expression, brain, heart, lung, liver, testis and spleen.

The protein resides in the cell membrane. The protein localises to the membrane. It is found in the coated pit. In terms of biological role, component of the adapter complexes which link clathrin to receptors in coated vesicles. Clathrin-associated protein complexes are believed to interact with the cytoplasmic tails of membrane proteins, leading to their selection and concentration. AP50 is a subunit of the plasma membrane adapter. Essential wnt/egl-20 signaling protein that functions in wnt/egl-20-producing cells. Required for the AP-2 complex-mediated endocytosis of membrane proteins including wntless homolog mig-14 in egl-20-producing cells. During development, regulates the migration of HSN neurons and the left and right Q neuroblasts (QL and QR, respectively) and their descendants, possibly through hox gene and wnt/egl-20 gene target mab-5, and plays a role in establishing ALM and PLM neuronal cell polarity. Regulates AWB sensory neuron cilia membrane expansion during development, potentially via localization of tub-1 and PtdIns(4,5)P2 to the ciliary base. Required for the asymmetric divisions of V5 cells. This chain is AP-2 complex subunit mu (dpy-23), found in Caenorhabditis elegans.